A 409-amino-acid polypeptide reads, in one-letter code: Peptidase T (409 aa).

Residue His78 coordinates Zn(2+). Residue Asp80 is part of the active site. A Zn(2+)-binding site is contributed by Asp140. Glu173 functions as the Proton acceptor in the catalytic mechanism. 3 residues coordinate Zn(2+): Glu174, Asp196, and His379.

Belongs to the peptidase M20B family. Zn(2+) serves as cofactor.

Its subcellular location is the cytoplasm. The enzyme catalyses Release of the N-terminal residue from a tripeptide.. Its function is as follows. Cleaves the N-terminal amino acid of tripeptides. This Salmonella enteritidis PT4 (strain P125109) protein is Peptidase T.